A 428-amino-acid polypeptide reads, in one-letter code: Ribosomal RNA small subunit methyltransferase B (428 aa).

Residues 253–259, Asp-276, Asp-302, and Asp-321 each bind S-adenosyl-L-methionine; that span reads CAAPGGK. The Nucleophile role is filled by Cys-374.

It belongs to the class I-like SAM-binding methyltransferase superfamily. RsmB/NOP family.

Its subcellular location is the cytoplasm. It carries out the reaction cytidine(967) in 16S rRNA + S-adenosyl-L-methionine = 5-methylcytidine(967) in 16S rRNA + S-adenosyl-L-homocysteine + H(+). Its function is as follows. Specifically methylates the cytosine at position 967 (m5C967) of 16S rRNA. In Enterobacter sp. (strain 638), this protein is Ribosomal RNA small subunit methyltransferase B.